Here is a 218-residue protein sequence, read N- to C-terminus: Cytidylate kinase (218 aa).

Residue 10-18 (GPAAAGKST) coordinates ATP.

It belongs to the cytidylate kinase family. Type 1 subfamily.

The protein localises to the cytoplasm. It catalyses the reaction CMP + ATP = CDP + ADP. It carries out the reaction dCMP + ATP = dCDP + ADP. This Staphylococcus haemolyticus (strain JCSC1435) protein is Cytidylate kinase.